The sequence spans 256 residues: MLRIADKTFQSRLFTGTGKFASSSLMLEAIRESGSEMATLAMKRVDLLRRDDALLAPLQASGVALLPNTSGAKTAEEAVFAAQLAREALGTHWIKLEIHPDARWLLPDPIETLRAAEKLVAQGFVVLPYCGADPVLCKRLEEAGCAAVMPLGAPIGSNQGLQTRALLEIIIAQASVPVVVDAGIGAPSHAAEALEMGADAVLVNTAIAVARDPVAMARAFRQAVEAGRTGFEAGLGARVFQAQATSPLTGFLEAQA.

The active-site Schiff-base intermediate with DXP is Lys95. 1-deoxy-D-xylulose 5-phosphate contacts are provided by residues Gly156, 182–183 (AG), and 204–205 (NT).

It belongs to the ThiG family. In terms of assembly, homotetramer. Forms heterodimers with either ThiH or ThiS.

It localises to the cytoplasm. It catalyses the reaction [ThiS sulfur-carrier protein]-C-terminal-Gly-aminoethanethioate + 2-iminoacetate + 1-deoxy-D-xylulose 5-phosphate = [ThiS sulfur-carrier protein]-C-terminal Gly-Gly + 2-[(2R,5Z)-2-carboxy-4-methylthiazol-5(2H)-ylidene]ethyl phosphate + 2 H2O + H(+). The protein operates within cofactor biosynthesis; thiamine diphosphate biosynthesis. In terms of biological role, catalyzes the rearrangement of 1-deoxy-D-xylulose 5-phosphate (DXP) to produce the thiazole phosphate moiety of thiamine. Sulfur is provided by the thiocarboxylate moiety of the carrier protein ThiS. In vitro, sulfur can be provided by H(2)S. The sequence is that of Thiazole synthase from Cronobacter sakazakii (strain ATCC BAA-894) (Enterobacter sakazakii).